Here is a 250-residue protein sequence, read N- to C-terminus: MATQISKKRKFVADGVFYAELNEVLTRELAEDGYSGVEVRVTPMRTEIIIRATRTQNVLGEKGRRIRELTSLVQKRFKFPVDSVELYAEKVNNRGLCAIAQAESLRYKLLGGLAVRRACYGVLRFVMESGAKGCEVIVSGKLRAARAKSMKFKDGYMVSSGQPTKEYIDAAVRHVLLRQGVLGIKVKIMLDWDPTGKSGPKTPLPDVVIIHAPKDDVVYSAPAQAAAPVTLVQEAPLTTVDYPEMIPPVA.

A KH type-2 domain is found at 21 to 92; it reads LNEVLTRELA…SVELYAEKVN (72 aa).

This sequence belongs to the universal ribosomal protein uS3 family. In terms of assembly, interacts with SNRNP35.

This is Small ribosomal subunit protein uS3z (RPS3A) from Arabidopsis thaliana (Mouse-ear cress).